Consider the following 698-residue polypeptide: Ubiquitin-like modifier-activating enzyme ATG7 (698 aa).

Residues 11-13 (FAP) carry the FAP motif motif. Residue Lys41 forms a Glycyl lysine isopeptide (Lys-Gly) (interchain with G-Cter in ubiquitin) linkage. Catalysis depends on Cys567, which acts as the Glycyl thioester intermediate. Ser693 bears the Phosphoserine mark.

The protein belongs to the ATG7 family. As to quaternary structure, homodimer. Interacts with ATG3; this interaction is essential for the transfer of ATG8-like proteins's thioester from ATG7 to ATG3 and plays a role in the conjugation of ATG12 to ATG5. Interacts with ATG12. Interacts with ATG10. Forms intermediate conjugates with GABARAPL1. Forms intermediate conjugates with ATG8-like proteins such as GABARAP, GABARAPL2 or MAP1LC3A. Interacts with EP300 acetyltransferase. Interacts with FOXO1. In terms of processing, acetylated by EP300. Polyubiquitinated on Lys-41 via 'Lys-63'-linked ubiquitin by TRIM32; this modification positiely regulates ATG8 and ATG12 activating enzyme activity leading to initiation of autophagy under metabolic stress. Widely expressed, especially in kidney, liver, lymph nodes and bone marrow.

The protein localises to the cytoplasm. It is found in the preautophagosomal structure. Functionally, E1-like activating enzyme involved in the 2 ubiquitin-like systems required for cytoplasm to vacuole transport (Cvt) and autophagy. Activates ATG12 for its conjugation with ATG5 as well as the ATG8 family proteins for their conjugation with phosphatidylethanolamine. Both systems are needed for the ATG8 association to Cvt vesicles and autophagosomes membranes. Facilitates LC3-I lipidation with phosphatidylethanolamine to form LC3-II which is found on autophagosomal membranes. Required for autophagic death induced by caspase-8 inhibition. Required for mitophagy which contributes to regulate mitochondrial quantity and quality by eliminating the mitochondria to a basal level to fulfill cellular energy requirements and preventing excess ROS production. Modulates p53/TP53 activity to regulate cell cycle and survival during metabolic stress. Also plays a key role in the maintenance of axonal homeostasis, the prevention of axonal degeneration, the maintenance of hematopoietic stem cells, the formation of Paneth cell granules, as well as in adipose differentiation. Plays a role in regulating the liver clock and glucose metabolism by mediating the autophagic degradation of CRY1 (clock repressor) in a time-dependent manner. The polypeptide is Ubiquitin-like modifier-activating enzyme ATG7 (Mus musculus (Mouse)).